We begin with the raw amino-acid sequence, 182 residues long: Peptidyl-tRNA hydrolase (182 aa).

Tyr14 is a binding site for tRNA. His19 (proton acceptor) is an active-site residue. Residues Phe64, Asn66, and Asn112 each contribute to the tRNA site.

Belongs to the PTH family. In terms of assembly, monomer.

It localises to the cytoplasm. The enzyme catalyses an N-acyl-L-alpha-aminoacyl-tRNA + H2O = an N-acyl-L-amino acid + a tRNA + H(+). Hydrolyzes ribosome-free peptidyl-tRNAs (with 1 or more amino acids incorporated), which drop off the ribosome during protein synthesis, or as a result of ribosome stalling. In terms of biological role, catalyzes the release of premature peptidyl moieties from peptidyl-tRNA molecules trapped in stalled 50S ribosomal subunits, and thus maintains levels of free tRNAs and 50S ribosomes. The sequence is that of Peptidyl-tRNA hydrolase from Wolbachia sp. subsp. Brugia malayi (strain TRS).